Consider the following 307-residue polypeptide: Homoserine O-acetyltransferase (307 aa).

Cys-142 functions as the Acyl-thioester intermediate in the catalytic mechanism. Residues Lys-163 and Ser-192 each coordinate substrate. Residue His-235 is the Proton acceptor of the active site. The active site involves Glu-237. Arg-249 contributes to the substrate binding site.

It belongs to the MetA family.

Its subcellular location is the cytoplasm. The catalysed reaction is L-homoserine + acetyl-CoA = O-acetyl-L-homoserine + CoA. Its pathway is amino-acid biosynthesis; L-methionine biosynthesis via de novo pathway; O-acetyl-L-homoserine from L-homoserine: step 1/1. Transfers an acetyl group from acetyl-CoA to L-homoserine, forming acetyl-L-homoserine. The sequence is that of Homoserine O-acetyltransferase from Rhizobium leguminosarum bv. trifolii (strain WSM2304).